Reading from the N-terminus, the 351-residue chain is Dihydroorotate dehydrogenase (quinone) (351 aa).

FMN-binding positions include Ala61–Lys65 and Thr85. Lys65 serves as a coordination point for substrate. Position 110–114 (Asn110–Phe114) interacts with substrate. The FMN site is built by Asn139 and Asn172. Residue Asn172 participates in substrate binding. Ser175 (nucleophile) is an active-site residue. A substrate-binding site is contributed by Asn177. Residues Lys217 and Thr245 each contribute to the FMN site. Substrate is bound at residue Asn246–Thr247. FMN contacts are provided by residues Gly268, Gly297, and Tyr318 to Ser319.

It belongs to the dihydroorotate dehydrogenase family. Type 2 subfamily. Monomer. Requires FMN as cofactor.

The protein resides in the cell membrane. The enzyme catalyses (S)-dihydroorotate + a quinone = orotate + a quinol. It participates in pyrimidine metabolism; UMP biosynthesis via de novo pathway; orotate from (S)-dihydroorotate (quinone route): step 1/1. Catalyzes the conversion of dihydroorotate to orotate with quinone as electron acceptor. This chain is Dihydroorotate dehydrogenase (quinone), found in Stenotrophomonas maltophilia (strain K279a).